The primary structure comprises 357 residues: Peptide chain release factor 1 (357 aa).

Residue Gln233 is modified to N5-methylglutamine.

Belongs to the prokaryotic/mitochondrial release factor family. Post-translationally, methylated by PrmC. Methylation increases the termination efficiency of RF1.

It is found in the cytoplasm. In terms of biological role, peptide chain release factor 1 directs the termination of translation in response to the peptide chain termination codons UAG and UAA. The protein is Peptide chain release factor 1 of Flavobacterium psychrophilum (strain ATCC 49511 / DSM 21280 / CIP 103535 / JIP02/86).